Here is a 526-residue protein sequence, read N- to C-terminus: Probable 1,4-alpha-glucan branching enzyme MT3115 (526 aa).

The active-site Nucleophile is the Glu205. Substrate contacts are provided by Arg251 and Gly268. Asp344 functions as the Proton donor in the catalytic mechanism. Residues Trp396 and Asp462 each coordinate substrate.

It belongs to the glycosyl hydrolase 57 family.

The catalysed reaction is Transfers a segment of a (1-&gt;4)-alpha-D-glucan chain to a primary hydroxy group in a similar glucan chain.. Its function is as follows. Catalyzes the formation of branch points in alpha-glucans by cleavage of an alpha-1,4 glycosidic bond and subsequent transfer of the cleaved-off oligosaccharide to a new alpha-1,6 position. Is probably involved in the biosynthesis of 6-O-methylglucosyl lipopolysaccharides (MGLP). This is Probable 1,4-alpha-glucan branching enzyme MT3115 from Mycobacterium tuberculosis (strain CDC 1551 / Oshkosh).